The sequence spans 132 residues: Small ribosomal subunit protein uS8c (132 aa).

Belongs to the universal ribosomal protein uS8 family. As to quaternary structure, part of the 30S ribosomal subunit.

The protein resides in the plastid. It is found in the chloroplast. In terms of biological role, one of the primary rRNA binding proteins, it binds directly to 16S rRNA central domain where it helps coordinate assembly of the platform of the 30S subunit. The protein is Small ribosomal subunit protein uS8c (rps8) of Chaetosphaeridium globosum (Charophycean green alga).